Consider the following 96-residue polypeptide: Large ribosomal subunit protein eL30 (96 aa).

It belongs to the eukaryotic ribosomal protein eL30 family.

In Methanosphaerula palustris (strain ATCC BAA-1556 / DSM 19958 / E1-9c), this protein is Large ribosomal subunit protein eL30.